Consider the following 79-residue polypeptide: Conotoxin 8 (79 aa).

The signal sequence occupies residues 1–22 (MKLTCVLIITVLFLTASQLITA). Positions 23–47 (DYSRGQRQYRAVRLGDEMRNFKGAR) are excised as a propeptide. Intrachain disulfides connect C49/C62, C56/C67, and C61/C77.

The protein belongs to the conotoxin O1 superfamily. Expressed by the venom duct.

The protein localises to the secreted. The protein is Conotoxin 8 of Conus vexillum (Flag cone).